Consider the following 361-residue polypeptide: Deoxyribonuclease (361 aa).

The first 24 residues, 1 to 24 (MMHLLRRGAFAILLIVLLPSAALA), serve as a signal peptide directing secretion. His149 is a catalytic residue.

The protein belongs to the DNase I family. Mg(2+) serves as cofactor. Ca(2+) is required as a cofactor.

The protein resides in the secreted. In terms of biological role, DNA nuclease able to digest short and long DNA substrate. Is resistant to ionic strength and thus active at high salt concentration. This Thioalkalivibrio sp. (strain K90mix) protein is Deoxyribonuclease.